A 243-amino-acid polypeptide reads, in one-letter code: MRQKTIDAIMAHAAAEYPRECCGVVAQKSRVERYFPCRNLSAEPTEHFHLSPEDYAAAEDWGTVVAIVHSHPDATTQPSELDKAQCDATLLPWHIVSWPEGDLRTIQPRGELPLLERPFVLGHFDCWGLVMSYFRQTHGIELHDYRVDYPWWENSYPDNFYQDCWYECGFREFDGPPQEGDLVIMQVQADKWNHAGILLEGNMLLHHLYGHLSQRVPYGGYWQERTMKIVRYKDVRGNEACRK.

One can recognise an MPN domain in the interval 1–120 (MRQKTIDAIM…ELPLLERPFV (120 aa)). Zn(2+)-binding residues include histidine 69, histidine 71, and aspartate 82. Residues 69 to 82 (HSHPDATTQPSELD) carry the JAMM motif motif. The 138-residue stretch at 96 to 233 (VSWPEGDLRT…ERTMKIVRYK (138 aa)) folds into the NlpC/P60 domain. The active-site Nucleophile is the cysteine 126. The Proton acceptor role is filled by histidine 194. The active site involves histidine 206.

This sequence belongs to the peptidase C40 family.

Its subcellular location is the host cytoplasm. Its function is as follows. Plays a role in tail tip complex assembly. The tail tip complex is assembled successively with three tail tip proteins J, one tail tip protein I, one tail tip protein L and one tail tip protein K. The tail tip complex interacts with tail measure protein to initiate tail tube assembly. The formation of the tail tip complex is completed by the addition of tail tip protein M, which is followed by tail tube polymerization. May be excluded form tail tip during maturation and would be absent from virions. May be involved in tail measure protein processing. This is Tail tip assembly protein K from Escherichia coli (Bacteriophage N15).